Consider the following 310-residue polypeptide: MAKIVVALGGNALGKSPQEQLELVKNTAKSLVGLITKGHEIVISHGNGPQVGSINLGLNYAAEHDQGPAFPFAECGAMSQAYIGYQLQESLQNELHSMGIDKQVVTLVTQVEVDEGDPAFNSPSKPIGLFYTKEEANRIQQEKGYQFVEDAGRGYRRVVPSPQPISIIELESIKTLVENDTLVIAAGGGGIPVIREQHDSFKGIDAVIDKDKTSALLGADIHCDQLIILTAIDYVYINYHTDQQQALKTTNIDTLKTYIEEKQFAKGSMLPKIESAISFIENNPNGSVLITSLNQLDAALEGKIGTLITK.

The protein belongs to the carbamate kinase family.

The protein resides in the cytoplasm. The enzyme catalyses hydrogencarbonate + NH4(+) + ATP = carbamoyl phosphate + ADP + H2O + H(+). Its pathway is metabolic intermediate metabolism; carbamoyl phosphate degradation; CO(2) and NH(3) from carbamoyl phosphate: step 1/1. This chain is Carbamate kinase 1 (arcC1), found in Staphylococcus epidermidis (strain ATCC 12228 / FDA PCI 1200).